A 425-amino-acid polypeptide reads, in one-letter code: 26S proteasome regulatory subunit 7 (425 aa).

208–215 (GPPGTGKT) contributes to the ATP binding site.

The protein belongs to the AAA ATPase family.

Its subcellular location is the cytoplasm. The protein resides in the nucleus. The 26S proteasome is involved in the ATP-dependent degradation of ubiquitinated proteins. The regulatory (or ATPase) complex confers ATP dependency and substrate specificity to the 26S complex. The polypeptide is 26S proteasome regulatory subunit 7 (RPT1) (Prunus persica (Peach)).